The primary structure comprises 273 residues: MSLQKKISQELHVQPSIDPKQEIEKRVGFLKDYLKKTGAKGFVLGISGGQDSTLAGRLAQLAASELRQEGKEDAVFIAVRLPHGVQQDEGDAQLALSFIQPDKSWKYDIAPAVTAFSEQYQKDTGGPLSDFNKGNVKARMRMIAQYAVGGEEGLLVIGTDHAAEAVTGFFTKYGDGGADVLPLTGLTKRQGRTLLEALQAPERLYLKKPTADLLDDKPQQTDETELGITYNEIDDYLEGKPVSEQAVEAIEKRYVQSEHKRQVPASMFDDWWK.

ATP is bound at residue 45–52 (GISGGQDS). Asp51 contributes to the Mg(2+) binding site. Position 139 (Arg139) interacts with deamido-NAD(+). ATP is bound at residue Thr159. Glu164 is a Mg(2+) binding site. Deamido-NAD(+) is bound by residues Lys172 and Asp179. Positions 188 and 210 each coordinate ATP. 259–260 (HK) lines the deamido-NAD(+) pocket.

Belongs to the NAD synthetase family. As to quaternary structure, homodimer.

The enzyme catalyses deamido-NAD(+) + NH4(+) + ATP = AMP + diphosphate + NAD(+) + H(+). Its pathway is cofactor biosynthesis; NAD(+) biosynthesis; NAD(+) from deamido-NAD(+) (ammonia route): step 1/1. Catalyzes the ATP-dependent amidation of deamido-NAD to form NAD. Uses ammonia as a nitrogen source. In Bacillus pumilus (strain SAFR-032), this protein is NH(3)-dependent NAD(+) synthetase.